The following is a 156-amino-acid chain: V-type sodium ATPase subunit K (156 aa).

Transmembrane regions (helical) follow at residues 11-31 (GMVF…IGSA), 60-80 (LLPG…FINL), 89-109 (GLNF…SGIA), and 132-152 (IIFA…SFLL).

The protein belongs to the V-ATPase proteolipid subunit family. The N-terminus is blocked.

The protein resides in the cell membrane. Involved in ATP-driven sodium extrusion. The chain is V-type sodium ATPase subunit K (ntpK) from Enterococcus hirae (strain ATCC 9790 / DSM 20160 / JCM 8729 / LMG 6399 / NBRC 3181 / NCIMB 6459 / NCDO 1258 / NCTC 12367 / WDCM 00089 / R).